The following is a 314-amino-acid chain: Homoserine kinase (314 aa).

95 to 105 contacts ATP; sequence PHSRGLGSSAA.

The protein belongs to the GHMP kinase family. Homoserine kinase subfamily.

It localises to the cytoplasm. It carries out the reaction L-homoserine + ATP = O-phospho-L-homoserine + ADP + H(+). Its pathway is amino-acid biosynthesis; L-threonine biosynthesis; L-threonine from L-aspartate: step 4/5. Catalyzes the ATP-dependent phosphorylation of L-homoserine to L-homoserine phosphate. This Mycobacterium sp. (strain KMS) protein is Homoserine kinase.